The following is a 726-amino-acid chain: ORC ubiquitin ligase 1 (726 aa).

The segment at cysteine 18–arginine 56 adopts an RING-type; degenerate zinc-finger fold. Coiled coils occupy residues leucine 87 to aspartate 129 and glutamate 155 to isoleucine 270. Serine 210 carries the phosphoserine modification. The interval alanine 274–glutamate 335 is disordered. The segment covering lysine 280–alanine 290 has biased composition (basic and acidic residues). The segment covering lysine 300 to leucine 320 has biased composition (low complexity). Residues cysteine 321–alanine 334 are compositionally biased toward polar residues. Residues serine 526, serine 553, serine 561, serine 568, serine 570, serine 719, and serine 721 each carry the phosphoserine modification. The tract at residues glutamine 687–serine 726 is disordered. Positions asparagine 702–serine 726 are enriched in polar residues.

As to quaternary structure, associates with ORC complex. Binds to chromatin; association is cell cycle-regulated, absent from mitotic chromosomes, is associated with chromatin from G1 and partially released from chromatin from mid S-phase. In terms of processing, auto-ubiquitinated.

The protein resides in the chromosome. It catalyses the reaction S-ubiquitinyl-[E2 ubiquitin-conjugating enzyme]-L-cysteine + [acceptor protein]-L-lysine = [E2 ubiquitin-conjugating enzyme]-L-cysteine + N(6)-ubiquitinyl-[acceptor protein]-L-lysine.. Its function is as follows. E3 ubiquitin ligase essential for DNA replication origin activation during S phase. Acts as a replication origin selector which selects the origins to be fired and catalyzes the multi-mono-ubiquitination of a subset of chromatin-bound ORC3 and ORC5 during S-phase. The protein is ORC ubiquitin ligase 1 (OBI1) of Pongo abelii (Sumatran orangutan).